Reading from the N-terminus, the 291-residue chain is Elongation factor Ts (291 aa).

Residues 80 to 83 form an involved in Mg(2+) ion dislocation from EF-Tu region; the sequence is TDFV.

The protein belongs to the EF-Ts family.

Its subcellular location is the cytoplasm. In terms of biological role, associates with the EF-Tu.GDP complex and induces the exchange of GDP to GTP. It remains bound to the aminoacyl-tRNA.EF-Tu.GTP complex up to the GTP hydrolysis stage on the ribosome. The polypeptide is Elongation factor Ts (Acinetobacter baylyi (strain ATCC 33305 / BD413 / ADP1)).